Reading from the N-terminus, the 308-residue chain is Ribonuclease Z (308 aa).

Positions 61, 63, 65, 66, 139, 210, and 268 each coordinate Zn(2+). The active-site Proton acceptor is the aspartate 65.

The protein belongs to the RNase Z family. As to quaternary structure, homodimer. Requires Zn(2+) as cofactor.

The catalysed reaction is Endonucleolytic cleavage of RNA, removing extra 3' nucleotides from tRNA precursor, generating 3' termini of tRNAs. A 3'-hydroxy group is left at the tRNA terminus and a 5'-phosphoryl group is left at the trailer molecule.. In terms of biological role, zinc phosphodiesterase, which displays some tRNA 3'-processing endonuclease activity. Probably involved in tRNA maturation, by removing a 3'-trailer from precursor tRNA. This chain is Ribonuclease Z, found in Natronomonas pharaonis (strain ATCC 35678 / DSM 2160 / CIP 103997 / JCM 8858 / NBRC 14720 / NCIMB 2260 / Gabara) (Halobacterium pharaonis).